Here is a 177-residue protein sequence, read N- to C-terminus: uncharacterized protein (177 aa).

The next 4 membrane-spanning stretches (helical) occupy residues asparagine 20–leucine 42, valine 62–serine 84, alanine 94–isoleucine 116, and glycine 136–alanine 158.

The protein resides in the cell membrane. This is an uncharacterized protein from Methanocaldococcus jannaschii (strain ATCC 43067 / DSM 2661 / JAL-1 / JCM 10045 / NBRC 100440) (Methanococcus jannaschii).